The following is a 45-amino-acid chain: DNA-directed RNA polymerase subunit Rpo12 (45 aa).

Zn(2+) is bound by residues Cys8, Cys23, and Cys26.

The protein belongs to the archaeal Rpo12/eukaryotic RPC10 RNA polymerase subunit family. As to quaternary structure, part of the RNA polymerase complex. Requires Zn(2+) as cofactor.

The protein localises to the cytoplasm. It carries out the reaction RNA(n) + a ribonucleoside 5'-triphosphate = RNA(n+1) + diphosphate. Functionally, DNA-dependent RNA polymerase (RNAP) catalyzes the transcription of DNA into RNA using the four ribonucleoside triphosphates as substrates. In Methanocella arvoryzae (strain DSM 22066 / NBRC 105507 / MRE50), this protein is DNA-directed RNA polymerase subunit Rpo12.